We begin with the raw amino-acid sequence, 639 residues long: Homeobox protein 9 (639 aa).

Disordered regions lie at residues 1–45, 66–144, 157–179, 262–313, 331–422, and 436–547; these read MLNS…DKQN, SPNH…DDNS, NQNQ…QNQN, PRTL…SSGT, SESS…QTSN, and TNKN…NNEN. Residues 72 to 109 adopt a coiled-coil conformation; it reads ANNNNNNNNNNNNNNNNNNNNNNNNNNNNNNNNNNNIQ. Low complexity-rich tracts occupy residues 73 to 119 and 126 to 142; these read NNNN…SNNN and GSLN…GNDD. 2 coiled-coil regions span residues 152 to 184 and 230 to 296; these read SNQN…KDSW and EIEI…NINE. A compositionally biased stretch (low complexity) spans 266-300; that stretch reads NNSSDSISENINNNNNNNNNNNNNNNNNINESNIN. The span at 345–354 shows a compositional bias: basic and acidic residues; sequence QPRKVPRDLN. Low complexity predominate over residues 358 to 399; that stretch reads NNNINYANNNNNNNNNNNNNNHNNNINNNNNNNNNNNNNSNN. A coiled-coil region spans residues 365–396; it reads NNNNNNNNNNNNNNHNNNINNNNNNNNNNNNN. Polar residues predominate over residues 405-422; sequence GSITNSVNIKPSKDQTSN. A compositionally biased stretch (low complexity) spans 436–526; that stretch reads TNKNNNNNNN…NNNLTSSSNN (91 aa). The span at 532 to 547 shows a compositional bias: polar residues; it reads GNTSPNQSSANGNNEN. The homeobox DNA-binding region spans 559–621; that stretch reads KRKKRGKLPG…NARRRILPRQ (63 aa).

It is found in the nucleus. Putative transcription factor. The polypeptide is Homeobox protein 9 (hbx9) (Dictyostelium discoideum (Social amoeba)).